The primary structure comprises 68 residues: Protein SlyX homolog (68 aa).

This sequence belongs to the SlyX family.

The polypeptide is Protein SlyX homolog (Pseudomonas entomophila (strain L48)).